The sequence spans 198 residues: ATP-dependent Clp protease proteolytic subunit 2 (198 aa).

Residue Ser-94 is the Nucleophile of the active site. His-119 is a catalytic residue.

This sequence belongs to the peptidase S14 family. Fourteen ClpP subunits assemble into 2 heptameric rings which stack back to back to give a disk-like structure with a central cavity, resembling the structure of eukaryotic proteasomes.

The protein resides in the cytoplasm. The catalysed reaction is Hydrolysis of proteins to small peptides in the presence of ATP and magnesium. alpha-casein is the usual test substrate. In the absence of ATP, only oligopeptides shorter than five residues are hydrolyzed (such as succinyl-Leu-Tyr-|-NHMec, and Leu-Tyr-Leu-|-Tyr-Trp, in which cleavage of the -Tyr-|-Leu- and -Tyr-|-Trp bonds also occurs).. Functionally, cleaves peptides in various proteins in a process that requires ATP hydrolysis. Has a chymotrypsin-like activity. Plays a major role in the degradation of misfolded proteins. This Borreliella burgdorferi (strain ATCC 35210 / DSM 4680 / CIP 102532 / B31) (Borrelia burgdorferi) protein is ATP-dependent Clp protease proteolytic subunit 2.